The sequence spans 62 residues: Double zinc ribbon protein TK0111 (62 aa).

The Zn(2+) site is built by cysteine 13, cysteine 16, cysteine 31, cysteine 34, cysteine 42, cysteine 45, cysteine 54, and cysteine 57.

In terms of assembly, crystallized in association with 70S ribosomes. It depends on Zn(2+) as a cofactor.

This chain is Double zinc ribbon protein TK0111, found in Thermococcus kodakarensis (strain ATCC BAA-918 / JCM 12380 / KOD1) (Pyrococcus kodakaraensis (strain KOD1)).